Here is a 339-residue protein sequence, read N- to C-terminus: Endo-beta-N-acetylglucosaminidase F1 (339 aa).

Residues 1–50 constitute a signal peptide (or 51, or 52); the sequence is MKKFINQFSASLKNNILVFLAFPFVWTSCARDNPLSSENSNISPNAAARA. The GH18 domain maps to 60 to 326; it reads IKLFSFTEVN…KLIAKELYGD (267 aa). E182 functions as the Proton donor in the catalytic mechanism. Residue W339 is a propeptide, removed in mature form.

Belongs to the glycosyl hydrolase 18 family. Monomer.

The protein localises to the secreted. The enzyme catalyses an N(4)-(oligosaccharide-(1-&gt;3)-[oligosaccharide-(1-&gt;6)]-beta-D-Man-(1-&gt;4)-beta-D-GlcNAc-(1-&gt;4)-alpha-D-GlcNAc)-L-asparaginyl-[protein] + H2O = an oligosaccharide-(1-&gt;3)-[oligosaccharide-(1-&gt;6)]-beta-D-Man-(1-&gt;4)-D-GlcNAc + N(4)-(N-acetyl-beta-D-glucosaminyl)-L-asparaginyl-[protein]. Its function is as follows. Endohydrolysis of the di-N-acetylchitobiosyl unit in high-mannose glycopeptides and glycoproteins. Does not hydrolyze complex bi- or triantennary glycans. The presence of a core-bound fucose impedes endo F1 hydrolysis. This Elizabethkingia meningoseptica (Chryseobacterium meningosepticum) protein is Endo-beta-N-acetylglucosaminidase F1 (endOF1).